Consider the following 505-residue polypeptide: Adenylosuccinate synthetase, chloroplastic (505 aa).

A chloroplast-targeting transit peptide spans 1–60; sequence MTTMNISTLRLDSNPITTSTKSTTHRSGALGYNGSYSCRLLQFQKKNKAPSIIVCSTKPL. GTP is bound by residues 92 to 98 and 120 to 122; these read GDEGKGK and GHT. The active-site Proton acceptor is the aspartate 93. Mg(2+)-binding residues include aspartate 93 and glycine 120. Residues 93–96, 118–121, threonine 210, arginine 224, glutamine 304, threonine 319, and arginine 383 each bind IMP; these read DEGK and NAGH. The active-site Proton donor is histidine 121. 379 to 385 is a binding site for substrate; the sequence is TTTGRPR. Residues arginine 385, 411–413, and 494–496 each bind GTP; these read KLD and GVG.

This sequence belongs to the adenylosuccinate synthetase family. In terms of assembly, homodimer. It depends on Mg(2+) as a cofactor.

The protein resides in the plastid. It localises to the chloroplast. It catalyses the reaction IMP + L-aspartate + GTP = N(6)-(1,2-dicarboxyethyl)-AMP + GDP + phosphate + 2 H(+). The protein operates within purine metabolism; AMP biosynthesis via de novo pathway; AMP from IMP: step 1/2. Its function is as follows. Plays an important role in the de novo pathway and in the salvage pathway of purine nucleotide biosynthesis. Catalyzes the first committed step in the biosynthesis of AMP from IMP. The sequence is that of Adenylosuccinate synthetase, chloroplastic from Nicotiana tabacum (Common tobacco).